An 871-amino-acid chain; its full sequence is MGITSVLTKDNVKKIDTDIDVQERDLNVFITSASRVIAPLWPISTFAARNPWMGLENQPFDQVASWLKNTRDVDIYPSASMIRSAKNKGEIDEDFVEMGLQRWLDSHSYHIPRDVAERFCHAALKLDPLPSDLLSSHELEKLVSECSGLDHIENVFMQPLSSYIENQDGERLVNILDHHVIKWSKLYLDDSQAGWTMPNREEGFYRAWQHLIQYDPALSKKQRERVKGWPKEAHLALQEALFALEIPESEIQTYLEGHLLSLPGWAGMMLWRSQQSSHEHALLTEYLAVRISMEWALIKPYLPLTNERSKKTISIAPLIAAWIHWGGLTLEEWSQMTASEQNEYLSFAYSFDEKLRKKLWLEAWEQTYTDRLSQKIISKQRETGREKSALAQLAFCIDVRSEPFRRQLEKEGPFETIGIAGFFGVPIATCELGSKHSHASLPIIQKPQNKIKEFADEDVFKKYNQRKQAIHSLSHTFKTMKQNALSSLLLPELSGPWLTLQMAARSFVPRKAGRFIRNLREAWLRKPDTKLSLHHDATEAEIPVGFTDEEKVNYARQALKMMGLTENIAPLVVICGHGSQSTNNPYSAALDCGACGGAAGGFNARVLAALCNLSEVREALLAEGIKIPEDTVFAAAEHNTTVDELHWLYVPELSEAAQEAFEQIEAVMPKVRHHVNAERLAQLPNFQSKLKNPKAEANRFAEDWSEIRPEWGLARNAAFIIGKRELTQDCDLEGRAFLHNYDWKQDESGELLANIIVGPGTVAQWINLQYYASTVAPHYYGSGNKATQTVTAGLGVMQGNASDLLAGLPWQSVMESDHEAYHSPLRLLILIQAPREYVERLLNHDSAFLQKVQNGWVRLASLDPEGCWESW.

Zn(2+)-binding residues include Cys396, Asp398, His577, and Cys592.

The protein belongs to the inorganic carbon transporter (TC 9.A.2) DabA family. As to quaternary structure, forms a complex with DabB. Zn(2+) serves as cofactor.

It localises to the cell membrane. Functionally, part of an energy-coupled inorganic carbon pump. In Bacillus subtilis (strain 168), this protein is Probable inorganic carbon transporter subunit DabA.